The chain runs to 825 residues: Endoglucanase C (825 aa).

An N-terminal signal peptide occupies residues 1-28 (MRNKLRRLLAIMMAVLLITSLFAPMVSA). The Proton donor role is filled by glutamate 219. Glutamate 335 functions as the Nucleophile in the catalytic mechanism. Residues 607–621 (DRESVPEPVEHDTKG) show a composition bias toward basic and acidic residues. The disordered stretch occupies residues 607–635 (DRESVPEPVEHDTKGDSALPSDFEDGTRQ).

The protein belongs to the glycosyl hydrolase 5 (cellulase A) family.

The enzyme catalyses Endohydrolysis of (1-&gt;4)-beta-D-glucosidic linkages in cellulose, lichenin and cereal beta-D-glucans.. In Evansella cellulosilytica (strain ATCC 21833 / DSM 2522 / FERM P-1141 / JCM 9156 / N-4) (Bacillus cellulosilyticus), this protein is Endoglucanase C (celC).